A 347-amino-acid polypeptide reads, in one-letter code: Holliday junction branch migration complex subunit RuvB (347 aa).

The tract at residues 1-183 is large ATPase domain (RuvB-L); sequence MTDVPRMVTP…FGIPVRLNFY (183 aa). ATP-binding positions include L22, R23, G64, K67, T68, T69, 130–132, R173, Y183, and R220; that span reads EDF. T68 contributes to the Mg(2+) binding site. A small ATPAse domain (RuvB-S) region spans residues 184–254; it reads TVDELEKIVS…IADHALGALE (71 aa). Residues 257 to 347 form a head domain (RuvB-H) region; the sequence is AAGLDAMDRR…QFGLFGGEDE (91 aa). The DNA site is built by R293, R312, and R317.

This sequence belongs to the RuvB family. In terms of assembly, homohexamer. Forms an RuvA(8)-RuvB(12)-Holliday junction (HJ) complex. HJ DNA is sandwiched between 2 RuvA tetramers; dsDNA enters through RuvA and exits via RuvB. An RuvB hexamer assembles on each DNA strand where it exits the tetramer. Each RuvB hexamer is contacted by two RuvA subunits (via domain III) on 2 adjacent RuvB subunits; this complex drives branch migration. In the full resolvosome a probable DNA-RuvA(4)-RuvB(12)-RuvC(2) complex forms which resolves the HJ.

It is found in the cytoplasm. It carries out the reaction ATP + H2O = ADP + phosphate + H(+). The RuvA-RuvB-RuvC complex processes Holliday junction (HJ) DNA during genetic recombination and DNA repair, while the RuvA-RuvB complex plays an important role in the rescue of blocked DNA replication forks via replication fork reversal (RFR). RuvA specifically binds to HJ cruciform DNA, conferring on it an open structure. The RuvB hexamer acts as an ATP-dependent pump, pulling dsDNA into and through the RuvAB complex. RuvB forms 2 homohexamers on either side of HJ DNA bound by 1 or 2 RuvA tetramers; 4 subunits per hexamer contact DNA at a time. Coordinated motions by a converter formed by DNA-disengaged RuvB subunits stimulates ATP hydrolysis and nucleotide exchange. Immobilization of the converter enables RuvB to convert the ATP-contained energy into a lever motion, pulling 2 nucleotides of DNA out of the RuvA tetramer per ATP hydrolyzed, thus driving DNA branch migration. The RuvB motors rotate together with the DNA substrate, which together with the progressing nucleotide cycle form the mechanistic basis for DNA recombination by continuous HJ branch migration. Branch migration allows RuvC to scan DNA until it finds its consensus sequence, where it cleaves and resolves cruciform DNA. This is Holliday junction branch migration complex subunit RuvB from Nitrobacter hamburgensis (strain DSM 10229 / NCIMB 13809 / X14).